The primary structure comprises 377 residues: Nitric oxide reductase FlRd-NAD(+) reductase (377 aa).

It belongs to the FAD-dependent oxidoreductase family. The cofactor is FAD.

Its subcellular location is the cytoplasm. The enzyme catalyses 2 reduced [nitric oxide reductase rubredoxin domain] + NAD(+) + H(+) = 2 oxidized [nitric oxide reductase rubredoxin domain] + NADH. Its pathway is nitrogen metabolism; nitric oxide reduction. One of at least two accessory proteins for anaerobic nitric oxide (NO) reductase. Reduces the rubredoxin moiety of NO reductase. The sequence is that of Nitric oxide reductase FlRd-NAD(+) reductase from Shigella sonnei (strain Ss046).